The primary structure comprises 155 residues: Ribosomal RNA large subunit methyltransferase H (155 aa).

Residues leucine 73, glycine 104, and 123–128 (LSPLTL) contribute to the S-adenosyl-L-methionine site.

It belongs to the RNA methyltransferase RlmH family. As to quaternary structure, homodimer.

The protein localises to the cytoplasm. It catalyses the reaction pseudouridine(1915) in 23S rRNA + S-adenosyl-L-methionine = N(3)-methylpseudouridine(1915) in 23S rRNA + S-adenosyl-L-homocysteine + H(+). Specifically methylates the pseudouridine at position 1915 (m3Psi1915) in 23S rRNA. In Pseudomonas syringae pv. tomato (strain ATCC BAA-871 / DC3000), this protein is Ribosomal RNA large subunit methyltransferase H.